We begin with the raw amino-acid sequence, 176 residues long: MADFNQILTPGDVDAGIINVVNEIPEGSCHKIEWNRKVAAFQLDRVEPAIFAKPTNYGFIPQTLDEDGDELDVLLITRQPLATGVFLEAKVIGVMKFVDDGEVDDKIVCVPADDRDTGNAYNSLADLPANLIKQIEFHFNNYKALKKPGSTKVTHWGDVEEAKEVIRESIKRWNER.

Substrate-binding residues include Lys31, Arg45, and Tyr57. Positions 67, 72, and 104 each coordinate Mg(2+). A substrate-binding site is contributed by Tyr142.

It belongs to the PPase family. As to quaternary structure, homohexamer. The cofactor is Mg(2+).

Its subcellular location is the cytoplasm. It catalyses the reaction diphosphate + H2O = 2 phosphate + H(+). Catalyzes the hydrolysis of inorganic pyrophosphate (PPi) forming two phosphate ions. This is Inorganic pyrophosphatase from Haemophilus influenzae (strain ATCC 51907 / DSM 11121 / KW20 / Rd).